Reading from the N-terminus, the 211-residue chain is Uracil phosphoribosyltransferase (211 aa).

Residues arginine 77, arginine 102, and 129-137 (DPMLATGGS) each bind 5-phospho-alpha-D-ribose 1-diphosphate. Residues isoleucine 192 and 197-199 (GDA) each bind uracil. Residue aspartate 198 participates in 5-phospho-alpha-D-ribose 1-diphosphate binding.

The protein belongs to the UPRTase family. Mg(2+) is required as a cofactor.

It catalyses the reaction UMP + diphosphate = 5-phospho-alpha-D-ribose 1-diphosphate + uracil. Its pathway is pyrimidine metabolism; UMP biosynthesis via salvage pathway; UMP from uracil: step 1/1. Its activity is regulated as follows. Allosterically activated by GTP. Catalyzes the conversion of uracil and 5-phospho-alpha-D-ribose 1-diphosphate (PRPP) to UMP and diphosphate. This is Uracil phosphoribosyltransferase from Corynebacterium aurimucosum (strain ATCC 700975 / DSM 44827 / CIP 107346 / CN-1) (Corynebacterium nigricans).